The following is a 478-amino-acid chain: Amino acid oxidase imqH (478 aa).

Residues 1 to 22 form the signal peptide; the sequence is MPAPKSIIIVGSGVFGLSTAHA. FAD contacts are provided by Val-14, Phe-15, Asp-38, Asn-53, Ala-57, Asn-58, Arg-63, and Ile-64. Residues Asn-97 and Asn-167 are each glycosylated (N-linked (GlcNAc...) asparagine). An FAD-binding site is contributed by Val-208. Cys-399 carries the post-translational modification S-8alpha-FAD cysteine. FAD contacts are provided by Phe-432 and Lys-433.

It belongs to the MSOX/MTOX family. In terms of assembly, dimer. Requires FAD as cofactor.

Its pathway is secondary metabolite biosynthesis. Nonribosomal peptide synthetase; part of the gene cluster that mediates the biosynthesis of imizoquins A to D, tripeptide-derived alkaloids that serve a protective role against oxidative stress that are essential for normal germination. ImqB is a canonical three-module NRPS that assembles the tripeptide backbone of the imizoquins via condensation of Trp, Tyr, and Leu-derived precursors. N-methylation by imqF and phenol oxidation by imqC, followed by cyclization via the FAD-dependent oxidase imqH carry out the three-step transformation of L-tyrosine into tetrahydroisoquinoline. Importantly, this sequence requires the presence of a free amine in the tyrosine moiety, indicating that isoquinoline formation occurs prior to peptide bond formation. The imidazolidin-4-one ring of imizoquins could form following additional oxidation of the methyl-derived bridgehead carbon by imqH. Lastly, O-methylation by imqG and leucine hydroxylation by imqE complete biosynthesis of the imizoquins. This Aspergillus flavus (strain ATCC 200026 / FGSC A1120 / IAM 13836 / NRRL 3357 / JCM 12722 / SRRC 167) protein is Amino acid oxidase imqH.